A 224-amino-acid chain; its full sequence is V-type proton ATPase subunit S1-like protein (224 aa).

Residues 147 to 167 (PAFLIGLAMSLILLLVLAYAL) form a helical membrane-spanning segment.

The protein belongs to the vacuolar ATPase subunit S1 family.

Its subcellular location is the membrane. The sequence is that of V-type proton ATPase subunit S1-like protein (ATP6AP1L) from Homo sapiens (Human).